Consider the following 141-residue polypeptide: Endoribonuclease YbeY (141 aa).

Positions 105, 109, and 115 each coordinate Zn(2+).

It belongs to the endoribonuclease YbeY family. Zn(2+) serves as cofactor.

Its subcellular location is the cytoplasm. Its function is as follows. Single strand-specific metallo-endoribonuclease involved in late-stage 70S ribosome quality control and in maturation of the 3' terminus of the 16S rRNA. This is Endoribonuclease YbeY from Karelsulcia muelleri (strain GWSS) (Sulcia muelleri).